A 154-amino-acid polypeptide reads, in one-letter code: MSNQMNTMDITEILKYLPHRYPFLLIDRVLDYTPGESLHAIKNVSINEPFFQGHFPIQPVMPGVLILEAMAQATGLLAFKTMSNDVPPPGVLYYFAGIDNARFRRVVVPGDQIHFEVKMIKERRGIGVFYGEARVDGEVACSAEIMCARREINQ.

Residue histidine 54 is part of the active site.

Belongs to the thioester dehydratase family. FabZ subfamily.

The protein localises to the cytoplasm. The catalysed reaction is a (3R)-hydroxyacyl-[ACP] = a (2E)-enoyl-[ACP] + H2O. In terms of biological role, involved in unsaturated fatty acids biosynthesis. Catalyzes the dehydration of short chain beta-hydroxyacyl-ACPs and long chain saturated and unsaturated beta-hydroxyacyl-ACPs. The protein is 3-hydroxyacyl-[acyl-carrier-protein] dehydratase FabZ of Shewanella putrefaciens (strain CN-32 / ATCC BAA-453).